The sequence spans 498 residues: Hexokinase-1 (498 aa).

Residues 4-24 (VTVGAAVVGAAAVCAVAALIV) traverse the membrane as a helical segment. The 454-residue stretch at 35–488 (GRAMAILREF…SGIGAALLRA (454 aa)) folds into the Hexokinase domain. Residues 89–228 (QLVMKLGVFY…VLDMRVSALV (140 aa)) are hexokinase small subdomain. ADP-binding residues include glycine 104, threonine 105, and asparagine 106. Threonine 194, lysine 195, asparagine 229, and aspartate 230 together coordinate D-glucose. The hexokinase large subdomain stretch occupies residues 229-477 (NDTVGTLAGG…TSIVFVHSND (249 aa)). ADP is bound at residue threonine 253. D-glucose contacts are provided by asparagine 256, glutamate 284, and glutamate 315. Residue glycine 442 coordinates ADP.

Belongs to the hexokinase family. In terms of tissue distribution, expressed in young and mature leaves, stems, roots, stolons, and developing and mature tubers.

It localises to the plastid. The protein localises to the chloroplast outer membrane. It carries out the reaction a D-hexose + ATP = a D-hexose 6-phosphate + ADP + H(+). It catalyses the reaction D-fructose + ATP = D-fructose 6-phosphate + ADP + H(+). The enzyme catalyses D-glucose + ATP = D-glucose 6-phosphate + ADP + H(+). It functions in the pathway carbohydrate metabolism; hexose metabolism. It participates in carbohydrate degradation; glycolysis; D-glyceraldehyde 3-phosphate and glycerone phosphate from D-glucose: step 1/4. In terms of biological role, fructose and glucose phosphorylating enzyme. May be involved in the phosphorylation of glucose during the export from plastids to cytosol. Seems neither to be involved in cell sugar sensing nor in carbohydrate metabolism in tuber. The protein is Hexokinase-1 (HXK1) of Solanum tuberosum (Potato).